The primary structure comprises 226 residues: ATP-dependent Clp protease proteolytic subunit 4 (226 aa).

Residue S122 is the Nucleophile of the active site. H147 is a catalytic residue.

Belongs to the peptidase S14 family. In terms of assembly, fourteen ClpP subunits assemble into 2 heptameric rings which stack back to back to give a disk-like structure with a central cavity, resembling the structure of eukaryotic proteasomes.

Its subcellular location is the cytoplasm. It catalyses the reaction Hydrolysis of proteins to small peptides in the presence of ATP and magnesium. alpha-casein is the usual test substrate. In the absence of ATP, only oligopeptides shorter than five residues are hydrolyzed (such as succinyl-Leu-Tyr-|-NHMec, and Leu-Tyr-Leu-|-Tyr-Trp, in which cleavage of the -Tyr-|-Leu- and -Tyr-|-Trp bonds also occurs).. Its function is as follows. Cleaves peptides in various proteins in a process that requires ATP hydrolysis. Has a chymotrypsin-like activity. Plays a major role in the degradation of misfolded proteins. The sequence is that of ATP-dependent Clp protease proteolytic subunit 4 from Streptomyces avermitilis (strain ATCC 31267 / DSM 46492 / JCM 5070 / NBRC 14893 / NCIMB 12804 / NRRL 8165 / MA-4680).